Here is a 780-residue protein sequence, read N- to C-terminus: Protein AMEIOTIC 1 (780 aa).

Disordered stretches follow at residues 32–60 and 237–327; these read KKKTSSSHSRNGKDDVNHDSTIQPRSPLS and APKE…RWSA. Residues 50–60 show a composition bias toward polar residues; sequence DSTIQPRSPLS. Basic and acidic residues-rich tracts occupy residues 263-291 and 309-327; these read EVKRSERNCKRKREAEASSKDNNGDEGKK and RTVESKDGDPRHGKDRWSA. Residues 448–547 are a coiled coil; the sequence is VEELTEEVNG…LEEQVTYLSS (100 aa).

It is found in the nucleus. The protein resides in the chromosome. Functionally, plays a fundamental role in building the proper chromosome structure at the beginning of meiosis in male meiocytes. Required for the transition from leptotene to zygotene in meiocytes. Required for homologous chromosome pairing, and initiation and progression of meiotic recombination. Regulates meiocyte cytoskeleton organization. This chain is Protein AMEIOTIC 1, found in Zea mays (Maize).